A 33-amino-acid chain; its full sequence is Photosystem II reaction center protein Psb30 (33 aa).

A helical transmembrane segment spans residues 5 to 25; it reads IVFQLTSLVLILAAGPLVVVL.

The protein belongs to the Psb30/Ycf12 family. As to quaternary structure, PSII is composed of 1 copy each of membrane proteins PsbA, PsbB, PsbC, PsbD, PsbE, PsbF, PsbH, PsbI, PsbJ, PsbK, PsbL, PsbM, PsbT, PsbX, PsbY, PsbZ, Psb30/Ycf12, peripheral proteins of the oxygen-evolving complex and a large number of cofactors. It forms dimeric complexes.

It is found in the plastid. Its subcellular location is the chloroplast thylakoid membrane. In terms of biological role, a core subunit of photosystem II (PSII), probably helps stabilize the reaction center. In Tetradesmus obliquus (Green alga), this protein is Photosystem II reaction center protein Psb30.